The following is a 159-amino-acid chain: Ribosomal RNA large subunit methyltransferase H (159 aa).

Residues Leu-76, Gly-108, and 127 to 132 (MSKMTF) contribute to the S-adenosyl-L-methionine site.

This sequence belongs to the RNA methyltransferase RlmH family. As to quaternary structure, homodimer.

It localises to the cytoplasm. The enzyme catalyses pseudouridine(1915) in 23S rRNA + S-adenosyl-L-methionine = N(3)-methylpseudouridine(1915) in 23S rRNA + S-adenosyl-L-homocysteine + H(+). Specifically methylates the pseudouridine at position 1915 (m3Psi1915) in 23S rRNA. This chain is Ribosomal RNA large subunit methyltransferase H, found in Ureaplasma parvum serovar 3 (strain ATCC 27815 / 27 / NCTC 11736).